Consider the following 291-residue polypeptide: Serine hydrolase BPHL (291 aa).

Positions 1–37 are cleaved as a signal peptide; the sequence is MATATVRPAAQRLRLLLSPLKSRICVPQAEPVATFGT. The 112-residue stretch at 62-173 folds into the AB hydrolase-1 domain; the sequence is AILLLPGMLG…ANAYVTEEDS (112 aa). Lysine 74 carries the post-translational modification N6-acetyllysine; alternate. Residue lysine 74 is modified to N6-succinyllysine; alternate. Residues lysine 86 and lysine 119 each carry the N6-acetyllysine modification. N6-acetyllysine; alternate is present on lysine 126. Lysine 126 bears the N6-succinyllysine; alternate mark. The active-site Nucleophile is serine 139. Lysine 184 bears the N6-succinyllysine mark. Lysine 191 is subject to N6-acetyllysine; alternate. The residue at position 191 (lysine 191) is an N6-succinyllysine; alternate. Lysine 217 is modified (N6-acetyllysine). Glutamate 221 contributes to the Mg(2+) binding site. Lysine 243 bears the N6-acetyllysine mark. Aspartate 244 serves as the catalytic Charge relay system. 2 positions are modified to N6-acetyllysine; alternate: lysine 260 and lysine 271. Lysine 260 and lysine 271 each carry N6-succinyllysine; alternate. Histidine 272 acts as the Charge relay system in catalysis.

Belongs to the AB hydrolase superfamily. Lipase family. As to quaternary structure, monomer. May also form homodimers.

It localises to the mitochondrion. The catalysed reaction is L-homocysteine thiolactone + H2O = L-homocysteine + H(+). It catalyses the reaction valacyclovir + H2O = acyclovir + L-valine + H(+). Functionally, specific alpha-amino acid ester serine hydrolase that prefers small, hydrophobic, and aromatic side chains and does not have a stringent requirement for the leaving group other than preferring a primary alcohol. Has homocysteine-thiolactonase activity (in vitro) and may play a significant role in the detoxification of homocysteine thiolactone in vivo. Catalyzes the hydrolytic activation of amino acid ester prodrugs of nucleoside analogs such as valacyclovir and valganciclovir, converting them into their active forms (acyclovir and ganciclovir). The chain is Serine hydrolase BPHL (Bphl) from Mus musculus (Mouse).